An 899-amino-acid polypeptide reads, in one-letter code: ATP-dependent DNA helicase DDX31 (899 aa).

Basic residues-rich tracts occupy residues 1–12 (MNKHDQKKKRNK) and 21–31 (KKSKGFIKNKK). The tract at residues 1 to 142 (MNKHDQKKKR…SKHKRNVPSK (142 aa)) is disordered. Over residues 76–85 (NMNDDDDNNM) the composition is skewed to acidic residues. Over residues 86 to 102 (NDDYNNNNIKGDYNNNN) the composition is skewed to low complexity. Positions 106-121 (DDVDDDDYDDDDDDNF) are enriched in acidic residues. The Q motif motif lies at 173–201 (FCDLKYILSESLINTLEKNEFIKMTSIQK). In terms of domain architecture, Helicase ATP-binding spans 204 to 433 (IPLFFKPNDI…NYCLTNNTMW (230 aa)). 217–224 (SMTGSGKT) contacts ATP. A DEAD box motif is present at residues 332–335 (DEAD). Residues 463–472 (NRENSPLNIH) are compositionally biased toward polar residues. Residues 463 to 517 (NRENSPLNIHNNDDNDDNDDNDENNGDNNNNNDDNNNNNDDNNNKNNDDDNNNTY) form a disordered region. The span at 476-487 (DNDDNDDNDENN) shows a compositional bias: acidic residues. Low complexity predominate over residues 488–503 (GDNNNNNDDNNNNNDD). The Helicase C-terminal domain occupies 593 to 782 (KITPVLERED…TIINHFKKFC (190 aa)).

This sequence belongs to the DEAD box helicase family. DDX31/DBP7 subfamily.

Its subcellular location is the nucleus. It is found in the nucleolus. The catalysed reaction is ATP + H2O = ADP + phosphate + H(+). Has DNA helicase activity and may also have RNA helicase activity; the DNA helicase direction was not determined. Shows ssDNA and RNA dependent ATPase activity. This Plasmodium falciparum (isolate 3D7) protein is ATP-dependent DNA helicase DDX31 (DDX31).